Reading from the N-terminus, the 724-residue chain is Actin-related protein 5 (724 aa).

Disordered stretches follow at residues 358 to 391 (QSLR…LMNV), 412 to 450 (TTAE…ESYL), and 467 to 488 (KKRL…IGRG). Basic and acidic residues predominate over residues 414 to 446 (AEGRLRARQKRNEEELEKEKRNQLEEERRRENP). Ser-542 carries the post-translational modification Phosphoserine.

Belongs to the actin family. ARP5 subfamily. As to quaternary structure, component of the INO80 chromatin-remodeling complex. Interacts with EEN. Expressed ubiquitously in seedlings, roots, leaves, buds, flowers and siliques.

It localises to the nucleus. The protein resides in the nucleoplasm. The protein localises to the cytoplasm. Probable subunit of a chromatin-remodeling complex. Involved in DNA repair. Required for multicellular development of all organs. This is Actin-related protein 5 from Arabidopsis thaliana (Mouse-ear cress).